We begin with the raw amino-acid sequence, 225 residues long: Phosphoribosylformylglycinamidine synthase subunit PurQ (225 aa).

Residues 5-225 (SAVITFPGSN…ESVVRGLVEA (221 aa)) form the Glutamine amidotransferase type-1 domain. Cys89 acts as the Nucleophile in catalysis. Active-site residues include His197 and Glu199.

Part of the FGAM synthase complex composed of 1 PurL, 1 PurQ and 2 PurS subunits.

The protein localises to the cytoplasm. It carries out the reaction N(2)-formyl-N(1)-(5-phospho-beta-D-ribosyl)glycinamide + L-glutamine + ATP + H2O = 2-formamido-N(1)-(5-O-phospho-beta-D-ribosyl)acetamidine + L-glutamate + ADP + phosphate + H(+). The enzyme catalyses L-glutamine + H2O = L-glutamate + NH4(+). The protein operates within purine metabolism; IMP biosynthesis via de novo pathway; 5-amino-1-(5-phospho-D-ribosyl)imidazole from N(2)-formyl-N(1)-(5-phospho-D-ribosyl)glycinamide: step 1/2. In terms of biological role, part of the phosphoribosylformylglycinamidine synthase complex involved in the purines biosynthetic pathway. Catalyzes the ATP-dependent conversion of formylglycinamide ribonucleotide (FGAR) and glutamine to yield formylglycinamidine ribonucleotide (FGAM) and glutamate. The FGAM synthase complex is composed of three subunits. PurQ produces an ammonia molecule by converting glutamine to glutamate. PurL transfers the ammonia molecule to FGAR to form FGAM in an ATP-dependent manner. PurS interacts with PurQ and PurL and is thought to assist in the transfer of the ammonia molecule from PurQ to PurL. The chain is Phosphoribosylformylglycinamidine synthase subunit PurQ from Novosphingobium aromaticivorans (strain ATCC 700278 / DSM 12444 / CCUG 56034 / CIP 105152 / NBRC 16084 / F199).